Consider the following 513-residue polypeptide: Pleiotropic regulator 1 (513 aa).

An N-acetylmethionine modification is found at methionine 1. The interval 60 to 79 (TSKENLKEKGPQNATDSYPH) is disordered. At serine 119 the chain carries Phosphoserine. A disordered region spans residues 136 to 160 (VDANRTGPAGSEYRHPGASDRSQPT). Serine 200 bears the Phosphoserine mark. 7 WD repeats span residues 201 to 240 (GHLGWVRCIAVEPGNQWFVTGSADRTIKIWDLASGKLKLS), 243 to 282 (GHISTVRGVIVSTRSPYLFSCGEDKQVKCWDLEYNKVIRH), 285 to 324 (GHLSAVYGLDLHPTLDVLVTCSRDSTARIWDVRTKASVHT), 327 to 366 (GHTNAVATVRCQAAEPQIITGSHDTTIRLWDLVAGKTRVT), 369 to 409 (NHKK…QNLS), 410 to 448 (GHNAIINTLAVNADGVLVSGADNGTMHLWDWRTGYNFQR), and 459 to 498 (DSESGIFACAFDRSESRLLTAEADKTIKVYREDETATEET). Serine 390 is subject to Phosphoserine.

The protein belongs to the WD repeat PRL1/PRL2 family. Identified in the spliceosome C complex. Component of the PRP19-CDC5L splicing complex composed of a core complex comprising a homotetramer of PRPF19, CDC5L, PLRG1 and BCAS2, and at least three less stably associated proteins CTNNBL1, CWC15 and HSPA8. Interacts (via its WD40 repeat domain) directly with CDC5L (via its C-terminal); the interaction is required for mRNA splicing but not for spliceosome assembly. Component of the minor spliceosome, which splices U12-type introns. Within this complex, interacts with CRIPT. Also interacts directly in the complex with BCAS2 and PRPF19. Interacts with USB1.

It is found in the nucleus. It localises to the nucleus speckle. In terms of biological role, involved in pre-mRNA splicing as component of the spliceosome. Component of the PRP19-CDC5L complex that forms an integral part of the spliceosome and is required for activating pre-mRNA splicing. As a component of the minor spliceosome, involved in the splicing of U12-type introns in pre-mRNAs. This is Pleiotropic regulator 1 (Plrg1) from Mus musculus (Mouse).